Reading from the N-terminus, the 524-residue chain is Origin of replication complex subunit 5 (524 aa).

Residues 1 to 19 (MSQPVTPRRTTRSSASASP) are compositionally biased toward low complexity. The segment at 1 to 56 (MSQPVTPRRTTRSSASASPSPAPASPTSPPKSRPKPSPRRQLLAAAAAPPKEDGSS) is disordered. Positions 20–31 (SPAPASPTSPPK) are enriched in pro residues. The span at 39 to 49 (RRQLLAAAAAP) shows a compositional bias: low complexity. 90 to 97 (GGAATGKT) lines the ATP pocket.

Belongs to the ORC5 family. In terms of assembly, component of the origin recognition complex (ORC) composed of at least ORC1, ORC2, ORC3, ORC4, ORC5 and ORC6. ORC is regulated in a cell-cycle and development dependent manner. It is sequentially assembled at the exit from anaphase of mitosis and disassembled as cells enter S phase.

It is found in the nucleus. Functionally, component of the origin recognition complex (ORC) that binds origins of replication. DNA-binding is ATP-dependent. The specific DNA sequences that define origins of replication have not been identified yet. ORC is required to assemble the pre-replication complex necessary to initiate DNA replication. This Oryza sativa subsp. indica (Rice) protein is Origin of replication complex subunit 5.